We begin with the raw amino-acid sequence, 565 residues long: MDFLLALVLVSSLYLQAAAEFDGRWPRQIVSSIGLCRYGGRIDCCWGWARQSWGQCQPVCQPRCKHGECIGPNKCKCHPGYAGKTCNQDLNECGLKPRPCKHRCMNTYGSYKCYCLNGYMLMPDGSCSSALTCSMANCQYGCDVVKGQIRCQCPSPGLQLAPDGRTCVDVDECATGRASCPRFRQCVNTFGSYICKCHKGFDLMYIGGKYQCHDIDECSLGQYQCSSFARCYNIRGSYKCKCKEGYQGDGLTCVYIPKVMIEPSGPIHVPKGNGTILKGDTGNNNWIPDVGSTWWPPKTPYIPPIITNRPTSKPTTRPTPKPTPIPTPPPPPPLPTELRTPLPPTTPERPTTGLTTIAPAASTPPGGITVDNRVQTDPQKPRGDVFIPRQPSNDLFEIFEIERGVSADDEAKDDPGVLVHSCNFDHGLCGWIREKDNDLHWEPIRDPAGGQYLTVSAAKAPGGKAARLVLPLGRLMHSGDLCLSFRHKVTGLHSGTLQVFVRKHGAHGAALWGRNGGHGWRQTQITLRGADIKSVVFKGEKRRGHTGEIGLDDVSLKKGHCSEER.

The signal sequence occupies residues 1–19 (MDFLLALVLVSSLYLQAAA). The EGF-like 1 domain occupies 52–87 (SWGQCQPVCQPRCKHGECIGPNKCKCHPGYAGKTCN). Disulfide bonds link Cys-56–Cys-69, Cys-60–Cys-75, Cys-77–Cys-86, Cys-93–Cys-104, Cys-100–Cys-113, and Cys-115–Cys-127. In terms of domain architecture, EGF-like 2; calcium-binding spans 89 to 128 (DLNECGLKPRPCKHRCMNTYGSYKCYCLNGYMLMPDGSCS). Residues 132–168 (TCSMANCQYGCDVVKGQIRCQCPSPGLQLAPDGRTCV) enclose the EGF-like 3 domain. An EGF-like 4; calcium-binding domain is found at 169–213 (DVDECATGRASCPRFRQCVNTFGSYICKCHKGFDLMYIGGKYQCH). Cystine bridges form between Cys-173–Cys-186, Cys-180–Cys-195, Cys-197–Cys-212, Cys-218–Cys-231, Cys-225–Cys-240, and Cys-242–Cys-253. The EGF-like 5; calcium-binding domain occupies 214 to 254 (DIDECSLGQYQCSSFARCYNIRGSYKCKCKEGYQGDGLTCV). Residues 301–389 (YIPPIITNRP…KPRGDVFIPR (89 aa)) are disordered. The segment covering 304-316 (PIITNRPTSKPTT) has biased composition (low complexity). Positions 317–347 (RPTPKPTPIPTPPPPPPLPTELRTPLPPTTP) are enriched in pro residues. Residues 382 to 384 (RGD) carry the Integrin interaction motif. One can recognise an MAM domain in the interval 420–563 (HSCNFDHGLC…VSLKKGHCSE (144 aa)).

Belongs to the nephronectin family. As to quaternary structure, homodimer and homotrimer. Expressed in kidney and lung and to a lower extent in brain, pregnant uterus, placenta, thyroid gland and blood vessels.

Its subcellular location is the secreted. The protein resides in the extracellular space. The protein localises to the extracellular matrix. Functional ligand of integrin alpha-8/beta-1 in kidney development. Regulates the expression of GDNF with integrin alpha-8/beta-1 which is essential for kidney development. May also play a role in the development and function of various tissues, regulating cell adhesion, spreading and survival through the binding of several integrins. This Homo sapiens (Human) protein is Nephronectin (NPNT).